The primary structure comprises 724 residues: Solute carrier organic anion transporter family member 4C1 (724 aa).

Residues 1 to 105 are Cytoplasmic-facing; the sequence is MKSAKGIENL…QCLQRCNTPG (105 aa). Phosphoserine occurs at positions 15, 16, 24, 26, and 28. Residues 30–71 form a disordered region; it reads IEVSALSSDPQRENSQPQELQKPQEPQKSPEPSLPSAPPNVS. Residues 44 to 60 show a composition bias toward low complexity; that stretch reads SQPQELQKPQEPQKSPE. The chain crosses the membrane as a helical span at residues 106-126; that stretch reads GFLLHYCLLAVTQGIVVNGLV. The Extracellular segment spans residues 127 to 145; that stretch reads NISISTVEKRYEMKSSLTG. The chain crosses the membrane as a helical span at residues 146-166; the sequence is LISSSYDISFCLLSLFVSFFG. The Cytoplasmic segment spans residues 167–172; it reads ERGHKP. Residues 173–197 form a helical membrane-spanning segment; sequence RWLAFAAFMIGLGALVFSLPQFFSG. At 198 to 223 the chain is on the extracellular side; that stretch reads EYKLGSLFEDTCVTTRNSTSCTSSTS. The helical transmembrane segment at 224 to 254 threads the bilayer; sequence SLSNYLYVFILGQLLLGAGGTPLYTLGTAFL. Topologically, residues 255-274 are cytoplasmic; the sequence is DDSVPTHKSSLYIGTGYAMS. The helical transmembrane segment at 275 to 295 threads the bilayer; the sequence is ILGPAIGYVLGGQLLTIYIDV. Topologically, residues 296–311 are extracellular; that stretch reads AMGESTDVTEDDPRWL. The helical transmembrane segment at 312–336 threads the bilayer; sequence GAWWIGFLLSWIFAWSLIIPFSCFP. Residues 337-377 are Cytoplasmic-facing; that stretch reads KHLPGTAEIQAGKTSQAHQSNSNADVKFGKSIKDFPAALKN. Residues 378 to 399 traverse the membrane as a helical segment; the sequence is LMKNAVFMCLVLSTSSEALITT. Residues 400–419 lie on the Extracellular side of the membrane; sequence GFATFLPKFIENQFGLTSSF. The helical transmembrane segment at 420–443 threads the bilayer; the sequence is AATLGGAVLIPGAALGQILGGFLV. Residues 444 to 447 lie on the Cytoplasmic side of the membrane; the sequence is SKFR. Residues 448-471 form a helical membrane-spanning segment; sequence MTCKNTMKFALFTSGVALTLSFVF. Topologically, residues 472–580 are extracellular; the sequence is MYAKCENEPF…ETHCAKLPIF (109 aa). Residues 495–549 form the Kazal-like domain; that stretch reads GNLIAPCNANCNCSRSYYYPVCGDGVQYFSPCFAGCSNPVAHRKPKVYYNCSCIE. 3 cysteine pairs are disulfide-bonded: cysteine 501–cysteine 530, cysteine 507–cysteine 526, and cysteine 516–cysteine 547. Residues 581–603 traverse the membrane as a helical segment; it reads LCIFFIVIIFTFMAGTPITVSIL. At 604–612 the chain is on the cytoplasmic side; that stretch reads RCVNHRQRS. Residues 613-638 form a helical membrane-spanning segment; the sequence is LALGIQFMVLRLLGTIPGPIIFGFTI. Residues 639 to 672 are Extracellular-facing; the sequence is DSTCILWDINDCGIKGACWIYDNIKMAHMLVAIS. Residues 673–690 form a helical membrane-spanning segment; it reads VTCKVITMFFNGFAIFLY. Over 691–724 the chain is Cytoplasmic; the sequence is KPPPSATDVSFHKENAVVTNVLAEQDLNKIVKEG.

This sequence belongs to the organo anion transporter (TC 2.A.60) family. In terms of tissue distribution, predominantly expressed in kidney but also weakly expressed in both fetal liver and kidney.

The protein resides in the basolateral cell membrane. The catalysed reaction is estrone 3-sulfate(out) = estrone 3-sulfate(in). It carries out the reaction L-thyroxine(out) = L-thyroxine(in). The enzyme catalyses 3,3',5-triiodo-L-thyronine(out) = 3,3',5-triiodo-L-thyronine(in). It catalyses the reaction chenodeoxycholate(out) = chenodeoxycholate(in). The catalysed reaction is glycocholate(out) = glycocholate(in). It carries out the reaction L-homoarginine(in) = L-homoarginine(out). The enzyme catalyses L-arginine(in) = L-arginine(out). It catalyses the reaction N(omega),N(omega)-dimethyl-L-arginine(out) = N(omega),N(omega)-dimethyl-L-arginine(in). Functionally, mediates the transport of organic anions such as steroids (estrone 3-sulfate, chenodeoxycholate, glycocholate) and thyroid hormones (3,3',5-triiodo-L-thyronine (T3), L-thyroxine (T4)), in the kidney. Capable of transporting cAMP and pharmacological substances such as digoxin, ouabain and methotrexate. Transport is independent of sodium, chloride ion, and ATP. Transport activity is stimulated by an acidic extracellular environment due to increased substrate affinity to the transporter. The driving force for this transport activity is currently not known. The role of hydrogencarbonate (HCO3(-), bicarbonate) as the probable counteranion that exchanges for organic anions is still not well defined. Functions as an uptake transporter at the apical membrane, suggesting a role in renal reabsorption. Involved in the renal secretion of the uremic toxin ADMA (N(omega),N(omega)-dimethyl-L-arginine or asymmetrical dimethylarginine), which is associated to cardiovascular events and mortality, and the structurally related amino acids L-arginine and L-homoarginine (a cardioprotective biomarker). Can act bidirectionally, suggesting a dual protective role of this transport protein; exporting L-homoarginine after being synthesized in proximal tubule cells, and mediating uptake of ADMA from the blood into proximal tubule cells where it is degraded by the enzyme dimethylarginine dimethylaminohydrolase 1 (DDAH1). May be involved in sperm maturation by enabling directed movement of organic anions and compounds within or between cells. This ion-transporting process is important to maintain the strict epididymal homeostasis necessary for sperm maturation. May have a role in secretory functions since seminal vesicle epithelial cells are assumed to secrete proteins involved in decapacitation by modifying surface proteins to facilitate the acquisition of the ability to fertilize the egg. The chain is Solute carrier organic anion transporter family member 4C1 from Homo sapiens (Human).